The following is a 219-amino-acid chain: 2-hydroxy-3-keto-5-methylthiopentenyl-1-phosphate phosphatase (219 aa).

The protein belongs to the HAD-like hydrolase superfamily. MtnX family.

It carries out the reaction 2-hydroxy-5-methylsulfanyl-3-oxopent-1-enyl phosphate + H2O = 1,2-dihydroxy-5-(methylsulfanyl)pent-1-en-3-one + phosphate. Its pathway is amino-acid biosynthesis; L-methionine biosynthesis via salvage pathway; L-methionine from S-methyl-5-thio-alpha-D-ribose 1-phosphate: step 4/6. In terms of biological role, dephosphorylates 2-hydroxy-3-keto-5-methylthiopentenyl-1-phosphate (HK-MTPenyl-1-P) yielding 1,2-dihydroxy-3-keto-5-methylthiopentene (DHK-MTPene). The sequence is that of 2-hydroxy-3-keto-5-methylthiopentenyl-1-phosphate phosphatase from Exiguobacterium sibiricum (strain DSM 17290 / CCUG 55495 / CIP 109462 / JCM 13490 / 255-15).